A 50-amino-acid polypeptide reads, in one-letter code: Major pollen allergen Ole e 6 (50 aa).

3 disulfide bridges follow: C8/C34, C12/C30, and C16/C26.

In terms of tissue distribution, expressed in pollen.

The chain is Major pollen allergen Ole e 6 (OLE6) from Olea europaea (Common olive).